The following is a 388-amino-acid chain: MSKVFKKTSSNGKLSIYLGKRDFVDHVDTVEPIDGVVLVDPEYLKCRKLFVMLTCAFRYGRDDLEVIGLTFRKDLYVQTLQVVPAESSSPQGPLTVLQERLLHKLGDNAYPFTLQMVTNLPCSVTLQPGPEDAGKPCGIDFEVKSFCAENPEETVSKRDYVRLVVRKVQFAPPEAGPGPSAQTIRRFLLSAQPLQLQAWMDREVHYHGEPISVNVSINNCTNKVIKKIKISVDQITDVVLYSLDKYTKTVFIQEFTETVAANSSFSQSFAVTPILAASCQKRGLALDGKLKHEDTNLASSTIIRPGMDKELLGILVSYKVRVNLMVSCGGILGDLTASDVGVELPLVLIHPKPSHEAASSEDIVIEEFTRKGEEESQKAVEAEGDEGS.

The protein belongs to the arrestin family. As to quaternary structure, homodimer; disulfide-linked in response to retinal illumination. Interacts with CXCR4; the interaction is dependent on the C-terminal phosphorylation of CXCR4 and modulates the calcium ion mobilization activity of CXCR4. Interacts with GPR84. Inner and outer segments, and the inner plexiform regions of the retina.

Its subcellular location is the photoreceptor inner segment. It localises to the cell projection. The protein localises to the cilium. The protein resides in the photoreceptor outer segment. In terms of biological role, may play a role in an as yet undefined retina-specific signal transduction. Could bind to photoactivated-phosphorylated red/green opsins. The polypeptide is Arrestin-C (ARR3) (Homo sapiens (Human)).